The primary structure comprises 294 residues: MHPRFQTAFAQLADNLQSALEPILADKYFPALLTGEQVSSLKSATGLDEDALAFALLPLAAACARTPLSNFNVGAIARGVSGTWYFGANMEFIGATMQQTVHAEQSAISHAWLSGEKALAAITVNYTPCGHCRQFMNELNSSLDLRIHLPGREAHALRDYLPDAFGPKDLEIKTLLMDEQDHGYALTGDALSQAAIAAANRSHMPYSKSPSGVALECKDGRIFSGSYAENAAFNPTLPPLQGALILLNLKGYDYPDIQRAVLAEKADAPLIQWDATSATLKALGCHSIDRVLLA.

CMP/dCMP-type deaminase domains are found at residues 48–168 (DEDA…FGPK) and 186–294 (LTGD…VLLA). Residue 89 to 91 (NME) participates in substrate binding. Position 102 (histidine 102) interacts with Zn(2+). Glutamate 104 acts as the Proton donor in catalysis. Positions 129 and 132 each coordinate Zn(2+).

It belongs to the cytidine and deoxycytidylate deaminase family. Homodimer. Requires Zn(2+) as cofactor.

The catalysed reaction is cytidine + H2O + H(+) = uridine + NH4(+). The enzyme catalyses 2'-deoxycytidine + H2O + H(+) = 2'-deoxyuridine + NH4(+). Its function is as follows. This enzyme scavenges exogenous and endogenous cytidine and 2'-deoxycytidine for UMP synthesis. The chain is Cytidine deaminase from Escherichia coli (strain ATCC 8739 / DSM 1576 / NBRC 3972 / NCIMB 8545 / WDCM 00012 / Crooks).